Reading from the N-terminus, the 450-residue chain is F-box/FBD/LRR-repeat protein At5g22660 (450 aa).

Residues 12–58 form the F-box domain; it reads EDRISSLPDHLLSQILSNLPTENAVTTSILSTRWKDLWLSTPVLDID. 2 LRR repeats span residues 157-181 and 294-317; these read LPNL…KFIS and LSSL…LKHE. The region spanning 364–416 is the FBD domain; the sequence is EEISLSSSVPKCLQSSLENVEIIRPNYGSGEEMKLSKYFLENSLVLKKFKLCR.

This is F-box/FBD/LRR-repeat protein At5g22660 from Arabidopsis thaliana (Mouse-ear cress).